We begin with the raw amino-acid sequence, 582 residues long: Cryptochrome DASH, chloroplastic/mitochondrial (582 aa).

The transit peptide at methionine 1 to alanine 49 directs the protein to the chloroplast and mitochondrion. Positions glycine 84–leucine 234 constitute a Photolyase/cryptochrome alpha/beta domain. A disordered region spans residues glycine 560 to lysine 582. The span at arginine 570–lysine 582 shows a compositional bias: basic residues.

Belongs to the DNA photolyase class-1 family. The cofactor is FAD. (6R)-5,10-methylene-5,6,7,8-tetrahydrofolate is required as a cofactor.

Its subcellular location is the plastid. The protein resides in the chloroplast. It localises to the mitochondrion. Its function is as follows. May have a photoreceptor function. Binds ss- and ds-DNA in a sequence non-specific manner, lacks photolyase activity. The protein is Cryptochrome DASH, chloroplastic/mitochondrial (CRYD) of Oryza sativa subsp. japonica (Rice).